A 246-amino-acid chain; its full sequence is UPF0736 protein Aflv_2136 (246 aa).

It belongs to the UPF0736 family.

In Anoxybacillus flavithermus (strain DSM 21510 / WK1), this protein is UPF0736 protein Aflv_2136.